We begin with the raw amino-acid sequence, 756 residues long: Receptor-like protein 3 (756 aa).

The first 50 residues, 1–50 (MTNEGRFKAKGFVRTSSTTRPIQALSFHMIGILLQCVLFISVLSIAVSEA), serve as a signal peptide directing secretion. The segment at 51 to 88 (LCNSQDRESLLWFSGNVSSSVSPLNWNPSIDCCSWEGI) is N-cap. The Extracellular segment spans residues 51-725 (LCNSQDRESL…ADTEDEEELK (675 aa)). Asparagine 66 carries N-linked (GlcNAc...) asparagine glycosylation. LRR repeat units follow at residues 95–119 (DSHI…VLRL), 120–143 (HHLS…FLSA), 145–169 (DQLK…TFRN), 174–199 (CFPI…IFMQ), 201–225 (TFDL…MCKS), 226–250 (SPQL…LGRC), 252–274 (KLSV…IYNL), 275–298 (SELE…ITHL), 299–322 (TKLK…IGQL), 323–346 (SRLQ…LANC), 348–370 (NLVK…DFSR), 371–395 (FQSL…VHSC), 397–419 (SLSA…VLEL), 420–443 (ESLS…GILQ), 445–471 (CRNL…LISS), 474–498 (FPNL…LIKL), 499–521 (KSLA…WLGT), and 522–546 (FPHL…LFQL). N-linked (GlcNAc...) asparagine glycosylation is found at asparagine 126 and asparagine 169. N-linked (GlcNAc...) asparagine glycosylation occurs at asparagine 208. 2 N-linked (GlcNAc...) asparagine glycosylation sites follow: asparagine 262 and asparagine 273. N-linked (GlcNAc...) asparagine glycans are attached at residues asparagine 334 and asparagine 345. N-linked (GlcNAc...) asparagine glycosylation occurs at asparagine 381. Asparagine 434, asparagine 447, and asparagine 459 each carry an N-linked (GlcNAc...) asparagine glycan. One copy of the LRR 19; degenerate repeat lies at 548-569 (ALMSQKAYDATERNYLKLPVFV). 4 LRR repeats span residues 570–593 (SPNN…IYIR), 608–631 (LKVL…ELSK), 632–656 (LTSL…LTSL), and 658–681 (YMSY…QFDT). N-linked (GlcNAc...) asparagine glycosylation occurs at asparagine 573. Asparagine 666 carries an N-linked (GlcNAc...) asparagine glycan. The C-cap/acidic domain stretch occupies residues 699–725 (LTSCKASTKLPATTTNKADTEDEEELK). Residues 726 to 746 (FIFILGVATGFFVSYCFYWCF) traverse the membrane as a helical segment. At 747–756 (FARLDAFISK) the chain is on the cytoplasmic side.

This sequence belongs to the RLP family. In terms of tissue distribution, expressed at very low levels in the shoot apex.

The protein localises to the cell membrane. Involved in the perception of CLV3 and CLV3-like peptides, that act as extracellular signals regulating meristems maintenance. Contributes, with WAKL22/RFO1, to resistance to F.oxysporum (f.) matthioli in cv. Columbia relative to cv. Ty-0. In Arabidopsis thaliana (Mouse-ear cress), this protein is Receptor-like protein 3.